Consider the following 275-residue polypeptide: Cis-toluene dihydrodiol dehydrogenase (275 aa).

9-33 contacts NAD(+); it reads LVTGGGAGLGRAIVDRYVAEGARVA. Ser-142 serves as a coordination point for substrate. Catalysis depends on Tyr-155, which acts as the Proton acceptor.

It belongs to the short-chain dehydrogenases/reductases (SDR) family.

The catalysed reaction is (1S,2R)-3-methylcyclohexa-3,5-diene-1,2-diol + NAD(+) = 3-methylcatechol + NADH + H(+). It participates in xenobiotic degradation; toluene degradation. This is Cis-toluene dihydrodiol dehydrogenase (todD) from Pseudomonas putida (strain ATCC 700007 / DSM 6899 / JCM 31910 / BCRC 17059 / LMG 24140 / F1).